A 213-amino-acid chain; its full sequence is 3-isopropylmalate dehydratase small subunit (213 aa).

This sequence belongs to the LeuD family. LeuD type 1 subfamily. As to quaternary structure, heterodimer of LeuC and LeuD.

The catalysed reaction is (2R,3S)-3-isopropylmalate = (2S)-2-isopropylmalate. The protein operates within amino-acid biosynthesis; L-leucine biosynthesis; L-leucine from 3-methyl-2-oxobutanoate: step 2/4. In terms of biological role, catalyzes the isomerization between 2-isopropylmalate and 3-isopropylmalate, via the formation of 2-isopropylmaleate. This chain is 3-isopropylmalate dehydratase small subunit, found in Magnetococcus marinus (strain ATCC BAA-1437 / JCM 17883 / MC-1).